The primary structure comprises 72 residues: NAD(P)H-quinone oxidoreductase subunit O (72 aa).

It belongs to the complex I NdhO subunit family. In terms of assembly, NDH-1 can be composed of about 15 different subunits; different subcomplexes with different compositions have been identified which probably have different functions.

It localises to the cellular thylakoid membrane. The enzyme catalyses a plastoquinone + NADH + (n+1) H(+)(in) = a plastoquinol + NAD(+) + n H(+)(out). It catalyses the reaction a plastoquinone + NADPH + (n+1) H(+)(in) = a plastoquinol + NADP(+) + n H(+)(out). In terms of biological role, NDH-1 shuttles electrons from an unknown electron donor, via FMN and iron-sulfur (Fe-S) centers, to quinones in the respiratory and/or the photosynthetic chain. The immediate electron acceptor for the enzyme in this species is believed to be plastoquinone. Couples the redox reaction to proton translocation, and thus conserves the redox energy in a proton gradient. Cyanobacterial NDH-1 also plays a role in inorganic carbon-concentration. This is NAD(P)H-quinone oxidoreductase subunit O from Synechococcus sp. (strain JA-3-3Ab) (Cyanobacteria bacterium Yellowstone A-Prime).